The sequence spans 318 residues: Very-long-chain 3-oxoacyl-CoA reductase-B (318 aa).

A helical membrane pass occupies residues 15 to 35; it reads FWYLGVVAATWWGLRAAWCLL. NADP(+) is bound at residue 54 to 83; the sequence is GKWAVVTGATDGIGKAYAEELARRGMNIVL. 2 helical membrane-spanning segments follow: residues 187–207 and 281–301; these read GVVL…LTVY and AITG…SMGM. Ser-194 is a binding site for substrate. Tyr-207 functions as the Proton acceptor in the catalytic mechanism.

The protein belongs to the short-chain dehydrogenases/reductases (SDR) family. 17-beta-HSD 3 subfamily.

Its subcellular location is the endoplasmic reticulum membrane. The catalysed reaction is a very-long-chain (3R)-3-hydroxyacyl-CoA + NADP(+) = a very-long-chain 3-oxoacyl-CoA + NADPH + H(+). It catalyses the reaction 17beta-estradiol + NAD(+) = estrone + NADH + H(+). It carries out the reaction 17beta-estradiol + NADP(+) = estrone + NADPH + H(+). It functions in the pathway lipid metabolism; fatty acid biosynthesis. The protein operates within steroid biosynthesis; estrogen biosynthesis. In terms of biological role, catalyzes the second of the four reactions of the long-chain fatty acids elongation cycle. This endoplasmic reticulum-bound enzymatic process, allows the addition of two carbons to the chain of long- and very long-chain fatty acids/VLCFAs per cycle. This enzyme has a 3-ketoacyl-CoA reductase activity, reducing 3-ketoacyl-CoA to 3-hydroxyacyl-CoA, within each cycle of fatty acid elongation. Thereby, it may participate in the production of VLCFAs of different chain lengths that are involved in multiple biological processes as precursors of membrane lipids and lipid mediators. May also catalyze the transformation of estrone (E1) into estradiol (E2) and play a role in estrogen formation. The sequence is that of Very-long-chain 3-oxoacyl-CoA reductase-B (hsd17b12-b) from Xenopus laevis (African clawed frog).